An 888-amino-acid chain; its full sequence is Prodigiosin synthesizing transferase PigC (888 aa).

This sequence belongs to the PigC family.

The protein operates within antibiotic biosynthesis; prodigiosin biosynthesis. In terms of biological role, involved in the biosynthesis of 2-methyl-3-n-amyl-pyrrole (MAP), one of the terminal products involved in the biosynthesis of the red antibiotic prodigiosin (Pig). Catalyzes the transfer of 2-methyl-3-n-amyl-pyrrole (MAP) to 4-methoxy-2,2'-bipyrrole-5-carbaldehyde (MBC) to yield prodigiosin. It is able to use substrates with a variety of monocyclic rings in place of the pyrrolic ring A of its natural substrate. The protein is Prodigiosin synthesizing transferase PigC of Serratia marcescens.